Reading from the N-terminus, the 844-residue chain is RPA-related protein RADX (844 aa).

The segment at residues 228–331 is a DNA-binding region (OB); it reads WHNRKNFPAL…LISTMEICLN (104 aa). 2 disordered regions span residues 571–609 and 626–664; these read PASETLQNASPPSTSQAAAKEGHYHERGSKRSQDDRPMD and GPTANPVPVPQPHSSAQMKGNKPNIPSRENSTANATGKS. The segment covering 572-587 has biased composition (polar residues); that stretch reads ASETLQNASPPSTSQA. Positions 590-608 are enriched in basic and acidic residues; sequence KEGHYHERGSKRSQDDRPM. Over residues 652 to 662 the composition is skewed to polar residues; the sequence is SRENSTANATG.

The protein localises to the chromosome. Single-stranded DNA-binding protein recruited to replication forks to maintain genome stability. Prevents fork collapse by antagonizing the accumulation of RAD51 at forks to ensure the proper balance of fork remodeling and protection without interfering with the capacity of cells to complete homologous recombination of double-strand breaks. In Rattus norvegicus (Rat), this protein is RPA-related protein RADX.